A 166-amino-acid polypeptide reads, in one-letter code: Large ribosomal subunit protein uL10 (166 aa).

The protein belongs to the universal ribosomal protein uL10 family. Part of the ribosomal stalk of the 50S ribosomal subunit. The N-terminus interacts with L11 and the large rRNA to form the base of the stalk. The C-terminus forms an elongated spine to which L12 dimers bind in a sequential fashion forming a multimeric L10(L12)X complex.

Functionally, forms part of the ribosomal stalk, playing a central role in the interaction of the ribosome with GTP-bound translation factors. This chain is Large ribosomal subunit protein uL10, found in Shewanella baltica (strain OS223).